Reading from the N-terminus, the 302-residue chain is uncharacterized protein (302 aa).

This is an uncharacterized protein from Ictaluridae (bullhead catfishes).